The chain runs to 67 residues: SPbeta prophage-derived uncharacterized protein YopZ (67 aa).

Residues 1 to 40 (MTSEMQLQAQIDVIEKENKELRRRNEELGQTVECQNKQIV) adopt a coiled-coil conformation. A helical membrane pass occupies residues 44–66 (WRLLFFASSWIVYGIVSAIKYLW).

Its subcellular location is the cell membrane. The polypeptide is SPbeta prophage-derived uncharacterized protein YopZ (yopZ) (Bacillus subtilis (strain 168)).